A 160-amino-acid polypeptide reads, in one-letter code: SsrA-binding protein (160 aa).

Belongs to the SmpB family.

Its subcellular location is the cytoplasm. Its function is as follows. Required for rescue of stalled ribosomes mediated by trans-translation. Binds to transfer-messenger RNA (tmRNA), required for stable association of tmRNA with ribosomes. tmRNA and SmpB together mimic tRNA shape, replacing the anticodon stem-loop with SmpB. tmRNA is encoded by the ssrA gene; the 2 termini fold to resemble tRNA(Ala) and it encodes a 'tag peptide', a short internal open reading frame. During trans-translation Ala-aminoacylated tmRNA acts like a tRNA, entering the A-site of stalled ribosomes, displacing the stalled mRNA. The ribosome then switches to translate the ORF on the tmRNA; the nascent peptide is terminated with the 'tag peptide' encoded by the tmRNA and targeted for degradation. The ribosome is freed to recommence translation, which seems to be the essential function of trans-translation. The protein is SsrA-binding protein of Salmonella agona (strain SL483).